The primary structure comprises 201 residues: NADH-quinone oxidoreductase subunit C (201 aa).

It belongs to the complex I 30 kDa subunit family. In terms of assembly, NDH-1 is composed of 14 different subunits. Subunits NuoB, C, D, E, F, and G constitute the peripheral sector of the complex.

The protein localises to the cell inner membrane. It carries out the reaction a quinone + NADH + 5 H(+)(in) = a quinol + NAD(+) + 4 H(+)(out). In terms of biological role, NDH-1 shuttles electrons from NADH, via FMN and iron-sulfur (Fe-S) centers, to quinones in the respiratory chain. The immediate electron acceptor for the enzyme in this species is believed to be ubiquinone. Couples the redox reaction to proton translocation (for every two electrons transferred, four hydrogen ions are translocated across the cytoplasmic membrane), and thus conserves the redox energy in a proton gradient. This Sinorhizobium medicae (strain WSM419) (Ensifer medicae) protein is NADH-quinone oxidoreductase subunit C.